Here is a 404-residue protein sequence, read N- to C-terminus: Cysteine desulfurase IscS (404 aa).

Pyridoxal 5'-phosphate is bound by residues 75 to 76, N155, Q183, and 203 to 205; these read AT and SAH. K206 carries the N6-(pyridoxal phosphate)lysine modification. Pyridoxal 5'-phosphate is bound at residue T243. The Cysteine persulfide intermediate role is filled by C328. Residue C328 participates in [2Fe-2S] cluster binding.

This sequence belongs to the class-V pyridoxal-phosphate-dependent aminotransferase family. NifS/IscS subfamily. Homodimer. Forms a heterotetramer with IscU, interacts with other sulfur acceptors. Pyridoxal 5'-phosphate is required as a cofactor.

It is found in the cytoplasm. It catalyses the reaction (sulfur carrier)-H + L-cysteine = (sulfur carrier)-SH + L-alanine. It functions in the pathway cofactor biosynthesis; iron-sulfur cluster biosynthesis. Its function is as follows. Master enzyme that delivers sulfur to a number of partners involved in Fe-S cluster assembly, tRNA modification or cofactor biosynthesis. Catalyzes the removal of elemental sulfur atoms from cysteine to produce alanine. Functions as a sulfur delivery protein for Fe-S cluster synthesis onto IscU, an Fe-S scaffold assembly protein, as well as other S acceptor proteins. This is Cysteine desulfurase IscS from Tolumonas auensis (strain DSM 9187 / NBRC 110442 / TA 4).